The sequence spans 490 residues: Thiamine biosynthesis bifunctional protein ThiED (490 aa).

Residues 1 to 213 (MASNGHTLRL…PDPALAATEI (213 aa)) form a thiamine-phosphate synthase region. 4-amino-2-methyl-5-(diphosphooxymethyl)pyrimidine is bound by residues 50-54 (QYRNK) and Asn82. Residues Asp83 and Asp102 each contribute to the Mg(2+) site. Residue Ser121 coordinates 4-amino-2-methyl-5-(diphosphooxymethyl)pyrimidine. Position 147–149 (147–149 (SRS)) interacts with 2-[(2R,5Z)-2-carboxy-4-methylthiazol-5(2H)-ylidene]ethyl phosphate. 4-amino-2-methyl-5-(diphosphooxymethyl)pyrimidine is bound at residue Lys150. 2-[(2R,5Z)-2-carboxy-4-methylthiazol-5(2H)-ylidene]ethyl phosphate is bound by residues Gly177 and 197-198 (IS). The hydroxymethylpyrimidine/phosphomethylpyrimidine kinase stretch occupies residues 229–490 (LTVAGSDSGG…ILAAEDVRDR (262 aa)). Gln266 lines the 4-amino-5-hydroxymethyl-2-methylpyrimidine pocket.

In the N-terminal section; belongs to the thiamine-phosphate synthase family. The protein in the C-terminal section; belongs to the ThiD family. The cofactor is Mg(2+).

It carries out the reaction 2-[(2R,5Z)-2-carboxy-4-methylthiazol-5(2H)-ylidene]ethyl phosphate + 4-amino-2-methyl-5-(diphosphooxymethyl)pyrimidine + 2 H(+) = thiamine phosphate + CO2 + diphosphate. The catalysed reaction is 2-(2-carboxy-4-methylthiazol-5-yl)ethyl phosphate + 4-amino-2-methyl-5-(diphosphooxymethyl)pyrimidine + 2 H(+) = thiamine phosphate + CO2 + diphosphate. It catalyses the reaction 4-methyl-5-(2-phosphooxyethyl)-thiazole + 4-amino-2-methyl-5-(diphosphooxymethyl)pyrimidine + H(+) = thiamine phosphate + diphosphate. The enzyme catalyses 4-amino-5-hydroxymethyl-2-methylpyrimidine + ATP = 4-amino-2-methyl-5-(phosphooxymethyl)pyrimidine + ADP + H(+). It carries out the reaction 4-amino-2-methyl-5-(phosphooxymethyl)pyrimidine + ATP = 4-amino-2-methyl-5-(diphosphooxymethyl)pyrimidine + ADP. It functions in the pathway cofactor biosynthesis; thiamine diphosphate biosynthesis; 4-amino-2-methyl-5-diphosphomethylpyrimidine from 5-amino-1-(5-phospho-D-ribosyl)imidazole: step 3/3. The protein operates within cofactor biosynthesis; thiamine diphosphate biosynthesis; thiamine phosphate from 4-amino-2-methyl-5-diphosphomethylpyrimidine and 4-methyl-5-(2-phosphoethyl)-thiazole: step 1/1. Its function is as follows. Condenses 4-methyl-5-(beta-hydroxyethyl)thiazole monophosphate (THZ-P) and 2-methyl-4-amino-5-hydroxymethyl pyrimidine pyrophosphate (HMP-PP) to form thiamine monophosphate (TMP). Catalyzes the phosphorylation of hydroxymethylpyrimidine phosphate (HMP-P) to HMP-PP, and of HMP to HMP-P. This is Thiamine biosynthesis bifunctional protein ThiED (thiDE) from Geobacter sulfurreducens (strain ATCC 51573 / DSM 12127 / PCA).